A 623-amino-acid chain; its full sequence is DNA mismatch repair protein MutL (623 aa).

Polar residues predominate over residues 353 to 368 (AQQSAPRPANSYSPAS). The segment at 353 to 389 (AQQSAPRPANSYSPASWRTAPPAPRSEWSPQTAHPAH) is disordered.

The protein belongs to the DNA mismatch repair MutL/HexB family.

In terms of biological role, this protein is involved in the repair of mismatches in DNA. It is required for dam-dependent methyl-directed DNA mismatch repair. May act as a 'molecular matchmaker', a protein that promotes the formation of a stable complex between two or more DNA-binding proteins in an ATP-dependent manner without itself being part of a final effector complex. The sequence is that of DNA mismatch repair protein MutL from Brucella melitensis biotype 1 (strain ATCC 23456 / CCUG 17765 / NCTC 10094 / 16M).